The sequence spans 355 residues: cAMP-dependent protein kinase catalytic subunit PRKX (355 aa).

M1 bears the N-acetylmethionine mark. Residues M1–S42 are disordered. The Protein kinase domain maps to W46–F300. ATP contacts are provided by residues V52–V60 and K75. Catalysis depends on D169, which acts as the Proton acceptor. T200 bears the Phosphothreonine mark. One can recognise an AGC-kinase C-terminal domain in the interval R301–F355. Residues P316–F355 are disordered. Positions E337–F355 are enriched in basic and acidic residues.

Belongs to the protein kinase superfamily. AGC Ser/Thr protein kinase family. cAMP subfamily. In terms of assembly, like other cAMP-dependent protein kinases, the inactive holoenzyme is probably composed of 2 PRKX catalytic subunits and a dimer of regulatory subunits. Interacts (cAMP-dependent) specifically with the regulatory subunits PRKAR1A and PRKAR1B. Compared to other cAMP-dependent serine/threonine protein kinases, does not interact with the 2 other PKA regulatory subunits PRKAR2A and PRKAR2B. Interacts with PIN1 (via WW domain). Interacts with cAMP-dependent protein kinase inhibitor/PKI proteins; inhibits PRKX. Interacts with GPKOW. Interacts with SMAD6. Interacts with PKD1; involved in differentiation and controlled morphogenesis of the kidney. Phosphorylated; autophosphorylates in vitro. Widely expressed.

The protein resides in the cytoplasm. The protein localises to the nucleus. The catalysed reaction is L-seryl-[protein] + ATP = O-phospho-L-seryl-[protein] + ADP + H(+). It catalyses the reaction L-threonyl-[protein] + ATP = O-phospho-L-threonyl-[protein] + ADP + H(+). With respect to regulation, binding of cAMP to the PRKAR1A or PRKAR1B regulatory subunits induces dissociation of the holoenzyme heterotetramer. The released monomeric PRKX is then active and able to phosphorylate its substrates. Its function is as follows. Serine/threonine protein kinase regulated by and mediating cAMP signaling in cells. Acts through phosphorylation of downstream targets that may include CREB, SMAD6 and PKD1 and has multiple functions in cellular differentiation and epithelial morphogenesis. Regulates myeloid cell differentiation through SMAD6 phosphorylation. Involved in nephrogenesis by stimulating renal epithelial cell migration and tubulogenesis. Also involved in angiogenesis through stimulation of endothelial cell proliferation, migration and vascular-like structure formation. This Mus musculus (Mouse) protein is cAMP-dependent protein kinase catalytic subunit PRKX (Prkx).